A 345-amino-acid chain; its full sequence is GTPase Obg (345 aa).

Residues 1-158 (MFIDSVKITL…RLVRLELKLI (158 aa)) enclose the Obg domain. Positions 159–339 (ADVGLVGFPN…LKFMLLEEIK (181 aa)) constitute an OBG-type G domain. GTP contacts are provided by residues 165–172 (GFPNVGKS), 190–194 (FTTLT), 212–215 (DIPG), 280–283 (SKSD), and 320–322 (SSL). 2 residues coordinate Mg(2+): S172 and T192.

Belongs to the TRAFAC class OBG-HflX-like GTPase superfamily. OBG GTPase family. In terms of assembly, monomer. It depends on Mg(2+) as a cofactor.

It is found in the cytoplasm. In terms of biological role, an essential GTPase which binds GTP, GDP and possibly (p)ppGpp with moderate affinity, with high nucleotide exchange rates and a fairly low GTP hydrolysis rate. Plays a role in control of the cell cycle, stress response, ribosome biogenesis and in those bacteria that undergo differentiation, in morphogenesis control. The sequence is that of GTPase Obg from Campylobacter jejuni subsp. doylei (strain ATCC BAA-1458 / RM4099 / 269.97).